The following is a 658-amino-acid chain: Threonine--tRNA ligase (658 aa).

The TGS domain maps to 1-61 (MIELVFPDGS…EKGGAFKILT (61 aa)). Residues 243–535 (DHRKLGRQMD…LIENYAGAFP (293 aa)) form a catalytic region. Residues Cys335, His386, and His512 each contribute to the Zn(2+) site.

This sequence belongs to the class-II aminoacyl-tRNA synthetase family. As to quaternary structure, homodimer. It depends on Zn(2+) as a cofactor.

It localises to the cytoplasm. It carries out the reaction tRNA(Thr) + L-threonine + ATP = L-threonyl-tRNA(Thr) + AMP + diphosphate + H(+). In terms of biological role, catalyzes the attachment of threonine to tRNA(Thr) in a two-step reaction: L-threonine is first activated by ATP to form Thr-AMP and then transferred to the acceptor end of tRNA(Thr). Also edits incorrectly charged L-seryl-tRNA(Thr). The polypeptide is Threonine--tRNA ligase (Phenylobacterium zucineum (strain HLK1)).